The sequence spans 511 residues: Vicilin-like seed storage protein At2g28490 (511 aa).

Residues 1 to 27 (MEKNKRAIGFLLLVVLINGVMMTRSNG) form the signal peptide. The disordered stretch occupies residues 54-81 (GGGGGGAWGGEGEGGGEWGGGGEGGGGG). Cupin type-1 domains lie at 86–238 (FMMR…PELQ) and 329–480 (YNIY…ETMR). Asn-231, Asn-369, Asn-403, and Asn-464 each carry an N-linked (GlcNAc...) asparagine glycan.

The protein belongs to the 7S seed storage protein family.

Functionally, seed storage protein. This Arabidopsis thaliana (Mouse-ear cress) protein is Vicilin-like seed storage protein At2g28490.